The following is a 148-amino-acid chain: Cytochrome c-type biogenesis protein CcmE (148 aa).

Over 1–7 the chain is Cytoplasmic; it reads MKPRSKR. Residues 8 to 28 traverse the membrane as a helical; Signal-anchor for type II membrane protein segment; the sequence is LLLVAGAVALLVGAVALVLNA. The Periplasmic segment spans residues 29–148; sequence FQQNLVFFHT…AQKAAQTVQQ (120 aa). Heme is bound by residues His-123 and Tyr-127.

This sequence belongs to the CcmE/CycJ family.

The protein resides in the cell inner membrane. Heme chaperone required for the biogenesis of c-type cytochromes. Transiently binds heme delivered by CcmC and transfers the heme to apo-cytochromes in a process facilitated by CcmF and CcmH. The polypeptide is Cytochrome c-type biogenesis protein CcmE (Aromatoleum aromaticum (strain DSM 19018 / LMG 30748 / EbN1) (Azoarcus sp. (strain EbN1))).